A 471-amino-acid chain; its full sequence is (13S,14R)-1,13-dihydroxy-N-methylcanadine 13-O-acetyltransferase AT1 (471 aa).

The protein belongs to the plant acyltransferase family.

It catalyses the reaction (13S,14R)-1,13-dihydroxy-N-methylcanadine + acetyl-CoA = (13S,14R)-13-O-acetyl-1-hydroxy-N-methylcanadine + CoA. It functions in the pathway alkaloid biosynthesis. Functionally, acetyltransferase involved in the biosynthesis of the benzylisoquinoline alkaloid noscapine. Converts (13S,14R)-1,13-dihydroxy-N-methylcanadine to (13S,14R)-13-O-acetyl-1-hydroxy-N-methylcanadine. The chain is (13S,14R)-1,13-dihydroxy-N-methylcanadine 13-O-acetyltransferase AT1 from Papaver somniferum (Opium poppy).